A 269-amino-acid polypeptide reads, in one-letter code: Tryptophan synthase alpha chain (269 aa).

Active-site proton acceptor residues include Glu54 and Asp65.

Belongs to the TrpA family. In terms of assembly, tetramer of two alpha and two beta chains.

It carries out the reaction (1S,2R)-1-C-(indol-3-yl)glycerol 3-phosphate + L-serine = D-glyceraldehyde 3-phosphate + L-tryptophan + H2O. It participates in amino-acid biosynthesis; L-tryptophan biosynthesis; L-tryptophan from chorismate: step 5/5. Functionally, the alpha subunit is responsible for the aldol cleavage of indoleglycerol phosphate to indole and glyceraldehyde 3-phosphate. This Synechococcus sp. (strain CC9902) protein is Tryptophan synthase alpha chain.